We begin with the raw amino-acid sequence, 646 residues long: Threonine--tRNA ligase (646 aa).

A TGS domain is found at 1-61; sequence MIKITFPDGN…NEDSNFEIVT (61 aa). Residues 242–540 form a catalytic region; that stretch reads DHRKLGRELD…LIEVYKGAFP (299 aa). Residues Cys336, His387, and His517 each contribute to the Zn(2+) site.

The protein belongs to the class-II aminoacyl-tRNA synthetase family. As to quaternary structure, homodimer. Zn(2+) is required as a cofactor.

It is found in the cytoplasm. The catalysed reaction is tRNA(Thr) + L-threonine + ATP = L-threonyl-tRNA(Thr) + AMP + diphosphate + H(+). Its function is as follows. Catalyzes the attachment of threonine to tRNA(Thr) in a two-step reaction: L-threonine is first activated by ATP to form Thr-AMP and then transferred to the acceptor end of tRNA(Thr). Also edits incorrectly charged L-seryl-tRNA(Thr). This chain is Threonine--tRNA ligase, found in Lactococcus lactis subsp. lactis (strain IL1403) (Streptococcus lactis).